We begin with the raw amino-acid sequence, 519 residues long: MSISSDEVNFLVYRYLQESGFSHSAFTFGIESHISQSNINGALAPPAALISIIQKGLQYVEAEVSINEDGTLFDGRPIESLSLIDAVMPDVVQTRQQAYRDKLAQQQTAAAAAAAAAAAATPNNQQPPAKNGENTANGEENGGHALANNHTDMMEVDGDVEIPSSKAVVLRGHESEVFICAWNPVSDLLASGSGDSTARIWNLSENSTSGSTQLVLRHCIREGGQDVPSNKDVTSLDWNSEGTLLATGSYDGFARIWTKDGNLASTLGQHKGPIFALKWNKKGNFILSAGVDKTTIIWDAHTGEAKQQFPFHSAPALDVDWQSNNTFASCSTDMCIHVCKLGQDRPIKTFQGHTNEVNAIKWDPTGNLLASCSDDMTLKIWSMKHDTCVHDLQAHNKEIYTIKWSPTGPGTNNPNANLMLASASFDSTVRLWDVDRGICIHTLTKHQEPVYSVAFSPDGRYLASGSFDKCVHIWNTQTGALVHSYRGTGGIFEVCWNAAGDKVGASASDGSVCVLDLRK.

One can recognise a LisH domain in the interval 4–36 (SSDEVNFLVYRYLQESGFSHSAFTFGIESHISQ). The F-box-like domain occupies 41–86 (GALAPPAALISIIQKGLQYVEAEVSINEDGTLFDGRPIESLSLIDA). A compositionally biased stretch (low complexity) spans 115 to 139 (AAAAAATPNNQQPPAKNGENTANGE). Residues 115–147 (AAAAAATPNNQQPPAKNGENTANGEENGGHALA) form a disordered region. WD repeat units lie at residues 172–211 (GHES…TSGS), 228–267 (PSNK…ASTL), 269–308 (QHKG…AKQQ), 311–349 (FHSA…PIKT), 352–391 (GHTN…CVHD), 394–442 (AHNK…CIHT), 445–484 (KHQE…LVHS), and 486–519 (RGTG…DLRK).

This sequence belongs to the WD repeat EBI family. In terms of assembly, interacts with heterodimers of rxra and thrb, and this interaction is abrogated by thyroid hormone binding to thrb. Interacts with ncor1.

The protein resides in the nucleus. In terms of biological role, F-box-like protein which acts as an integral component of the N-CoR transcriptional corepressor complex. Probably regulates transcription activation mediated by nuclear receptors. May mediate the recruitment of the 19S proteasome complex, leading to the subsequent proteasomal degradation of the N-CoR complex, thereby allowing cofactor exchange and transcription activation. The chain is F-box-like/WD repeat-containing protein TBL1XR1-A (tbl1xr1-a) from Xenopus laevis (African clawed frog).